The following is a 128-amino-acid chain: Large ribosomal subunit protein bL20c (128 aa).

Belongs to the bacterial ribosomal protein bL20 family.

The protein localises to the plastid. It is found in the chloroplast. Its function is as follows. Binds directly to 23S ribosomal RNA and is necessary for the in vitro assembly process of the 50S ribosomal subunit. It is not involved in the protein synthesizing functions of that subunit. This Nicotiana sylvestris (Wood tobacco) protein is Large ribosomal subunit protein bL20c.